Here is a 216-residue protein sequence, read N- to C-terminus: Squamosa promoter-binding-like protein 13 (216 aa).

Residues 32 to 110 form a disordered region; sequence GDGGAALPSP…PSGGGGGPRC (79 aa). Over residues 67 to 91 the composition is skewed to low complexity; the sequence is SSSAAVAAGASSSSSSSSVAAAARR. The segment covering 94 to 108 has biased composition (gly residues); that stretch reads GRAGGGAPSGGGGGP. The segment at 107–184 adopts an SBP-type zinc-finger fold; sequence GPRCQVERCG…AGHNERRRKS (78 aa). Zn(2+)-binding residues include cysteine 110, cysteine 115, cysteine 132, histidine 135, cysteine 151, cysteine 154, histidine 158, and cysteine 170. Positions 167–183 match the Bipartite nuclear localization signal motif; the sequence is KRSCRRRLAGHNERRRK. Residues 175-216 form a disordered region; the sequence is AGHNERRRKSAADTAHGENCRHADQDAGRSHQGTGNPPFQIR. Positions 189 to 203 are enriched in basic and acidic residues; the sequence is AHGENCRHADQDAGR. The segment covering 205-216 has biased composition (polar residues); that stretch reads HQGTGNPPFQIR.

As to expression, ubiquitous.

It is found in the nucleus. In terms of biological role, trans-acting factor that binds specifically to the consensus nucleotide sequence 5'-TNCGTACAA-3'. May be involved in panicle development. The chain is Squamosa promoter-binding-like protein 13 (SPL13) from Oryza sativa subsp. japonica (Rice).